A 335-amino-acid chain; its full sequence is Mevalonate kinase (335 aa).

111–121 (PVGAGLGSSAA) serves as a coordination point for ATP. Aspartate 162 (proton acceptor) is an active-site residue.

It belongs to the GHMP kinase family. Mevalonate kinase subfamily. As to quaternary structure, homodimer. It depends on Mg(2+) as a cofactor.

It localises to the cytoplasm. It carries out the reaction (R)-mevalonate + ATP = (R)-5-phosphomevalonate + ADP + H(+). It participates in isoprenoid biosynthesis; isopentenyl diphosphate biosynthesis via mevalonate pathway; isopentenyl diphosphate from (R)-mevalonate: step 1/3. Catalyzes the phosphorylation of (R)-mevalonate (MVA) to (R)-mevalonate 5-phosphate (MVAP). Functions in the mevalonate (MVA) pathway leading to isopentenyl diphosphate (IPP), a key precursor for the biosynthesis of isoprenoid compounds such as archaeal membrane lipids. In Pyrococcus abyssi (strain GE5 / Orsay), this protein is Mevalonate kinase.